A 391-amino-acid polypeptide reads, in one-letter code: Elongation factor Tu 2 (391 aa).

Residues Lys-10–Glu-201 enclose the tr-type G domain. The interval Gly-19 to Thr-26 is G1. Gly-19–Thr-26 contributes to the GTP binding site. A Mg(2+)-binding site is contributed by Thr-26. The tract at residues Gly-55–Ser-59 is G2. A G3 region spans residues Asp-76–Gly-79. Residues Asp-76–His-80 and Asn-131–Asp-134 each bind GTP. Positions Asn-131–Asp-134 are G4. The tract at residues Ser-169–Leu-171 is G5.

It belongs to the TRAFAC class translation factor GTPase superfamily. Classic translation factor GTPase family. EF-Tu/EF-1A subfamily. In terms of assembly, monomer.

It localises to the cytoplasm. It catalyses the reaction GTP + H2O = GDP + phosphate + H(+). Functionally, GTP hydrolase that promotes the GTP-dependent binding of aminoacyl-tRNA to the A-site of ribosomes during protein biosynthesis. The protein is Elongation factor Tu 2 of Bartonella bacilliformis (strain ATCC 35685 / KC583 / Herrer 020/F12,63).